A 153-amino-acid chain; its full sequence is MPQCALLLSLLGLLALSSACYIQNCPRGGKRALPETGIRQCMSCGPRDRGRCFGPNICCGEALGCLMGSPETARCAGENYLLTPCQAGGRPCGSEGGRCAVSGLCCNSESCAVDSDCLGETESLEPGDSSADSSPTELLLRLLHMSSRGQSEY.

Positions 1–19 are cleaved as a signal peptide; it reads MPQCALLLSLLGLLALSSA. C20 and C25 are joined by a disulfide. The residue at position 28 (G28) is a Glycine amide. Cystine bridges form between C41–C85, C44–C58, C52–C75, C59–C65, C92–C105, C99–C117, and C106–C111.

It belongs to the vasopressin/oxytocin family. Seven disulfide bonds are present in neurophysin.

The protein resides in the secreted. In terms of biological role, vasotocin is probably an antidiuretic hormone. This Takifugu rubripes (Japanese pufferfish) protein is Vasotocin-neurophysin VT 1.